Here is a 166-residue protein sequence, read N- to C-terminus: NAD(P)H-quinone oxidoreductase subunit I, chloroplastic (166 aa).

4Fe-4S ferredoxin-type domains are found at residues 55 to 84 (GRIH…VDWK) and 95 to 124 (LNYS…MTEE). Positions 64, 67, 70, 74, 104, 107, 110, and 114 each coordinate [4Fe-4S] cluster.

It belongs to the complex I 23 kDa subunit family. In terms of assembly, NDH is composed of at least 16 different subunits, 5 of which are encoded in the nucleus. The cofactor is [4Fe-4S] cluster.

It is found in the plastid. It localises to the chloroplast thylakoid membrane. It carries out the reaction a plastoquinone + NADH + (n+1) H(+)(in) = a plastoquinol + NAD(+) + n H(+)(out). It catalyses the reaction a plastoquinone + NADPH + (n+1) H(+)(in) = a plastoquinol + NADP(+) + n H(+)(out). NDH shuttles electrons from NAD(P)H:plastoquinone, via FMN and iron-sulfur (Fe-S) centers, to quinones in the photosynthetic chain and possibly in a chloroplast respiratory chain. The immediate electron acceptor for the enzyme in this species is believed to be plastoquinone. Couples the redox reaction to proton translocation, and thus conserves the redox energy in a proton gradient. This is NAD(P)H-quinone oxidoreductase subunit I, chloroplastic from Oteiza scandens (Climbing oteiza).